The sequence spans 580 residues: Cytochrome P450 monooxygenase helB1 (580 aa).

Residues 1–32 form a disordered region; sequence MRTYAIRPVSNRLPGPIEPKKHRRDRDNSTTG. N-linked (GlcNAc...) asparagine glycosylation is present at asparagine 28. Residues 61-81 form a helical membrane-spanning segment; that stretch reads FLNTISVLQVLAAIFIGALTY. Cysteine 497 serves as a coordination point for heme.

It belongs to the cytochrome P450 family. The cofactor is heme.

The protein resides in the membrane. It participates in mycotoxin biosynthesis. Cytochrome P450 monooxygenase; part of the gene cluster that mediates the biosynthesis of helvolic acid, an antibacterial nortriterpenoid. Protostadienol synthase helA cyclizes (3S)-oxidosqualene to (17Z)-protosta-17(20),24-dien-3-beta-ol (protostadienol). The synthesis of protostadienol is followed by several steps of monooxygenation, dehydrogenation, and acyl transfer to yield the final helvolic acid. Following the cyclization to the tetracyclic protostadienol by helA, cytochrome P450 monooxygenases helB1-mediated and helB2-mediated oxidation at C-4 and C-16, acyltransferase helD2-dependent acetylation of 16-OH, oxidation of C-21 by cytochrome P450 monooxygenase helB4, and short chain dehydrogenase helC-dependent oxidative decarboxylation yield the fusidane skeleton. This intermediate is further modified in three additional steps mediated by the cytochrome P450 monooxygenase helB3, the acyltransferase helD1, and the 3-ketosteroid 1-dehydrogenase helE to give helvolic acid. Compared with the late stages in the biosynthesis of helvolic acid, enzymes involved in the early stage modifications act in a relatively strict order. The hydroxylation of C-16 by helB1 and subsequent acetylation by helD2 should occur before the helB3-mediated oxidation of C-21. C-4 demethylation in fusidane-type antibiotics proceeds in an unusual manner though it is also achieved by oxidative decarboxylation. The methyl group at C-4 beta position is oxidized by helB1 and subsequently removed by the short chain dehydrogenase helC. The chain is Cytochrome P450 monooxygenase helB1 from Aspergillus fumigatus (strain ATCC MYA-4609 / CBS 101355 / FGSC A1100 / Af293) (Neosartorya fumigata).